The sequence spans 502 residues: 2-isopropylmalate synthase (502 aa).

Mn(2+) is bound by residues D1, H189, H191, and N225. One can recognise a Pyruvate carboxyltransferase domain in the interval 1 to 254 (DGEQALQASL…STNINYKEIY (254 aa)). Positions 379–502 (CLKFFSVQSI…VNKKLQELKK (124 aa)) are regulatory domain.

Belongs to the alpha-IPM synthase/homocitrate synthase family. LeuA type 1 subfamily. Homodimer. It depends on Mn(2+) as a cofactor.

The protein localises to the cytoplasm. The enzyme catalyses 3-methyl-2-oxobutanoate + acetyl-CoA + H2O = (2S)-2-isopropylmalate + CoA + H(+). It functions in the pathway amino-acid biosynthesis; L-leucine biosynthesis; L-leucine from 3-methyl-2-oxobutanoate: step 1/4. Functionally, catalyzes the condensation of the acetyl group of acetyl-CoA with 3-methyl-2-oxobutanoate (2-ketoisovalerate) to form 3-carboxy-3-hydroxy-4-methylpentanoate (2-isopropylmalate). This is 2-isopropylmalate synthase from Buchnera aphidicola subsp. Macrosiphoniella ludovicianae.